Consider the following 125-residue polypeptide: Phosphoribosyl-AMP cyclohydrolase (125 aa).

D74 contacts Mg(2+). A Zn(2+)-binding site is contributed by C75. Positions 76 and 78 each coordinate Mg(2+). Residues C92 and C99 each coordinate Zn(2+).

This sequence belongs to the PRA-CH family. Homodimer. It depends on Mg(2+) as a cofactor. Zn(2+) serves as cofactor.

The protein resides in the cytoplasm. The enzyme catalyses 1-(5-phospho-beta-D-ribosyl)-5'-AMP + H2O = 1-(5-phospho-beta-D-ribosyl)-5-[(5-phospho-beta-D-ribosylamino)methylideneamino]imidazole-4-carboxamide. The protein operates within amino-acid biosynthesis; L-histidine biosynthesis; L-histidine from 5-phospho-alpha-D-ribose 1-diphosphate: step 3/9. Functionally, catalyzes the hydrolysis of the adenine ring of phosphoribosyl-AMP. The polypeptide is Phosphoribosyl-AMP cyclohydrolase (Pelobacter propionicus (strain DSM 2379 / NBRC 103807 / OttBd1)).